A 372-amino-acid polypeptide reads, in one-letter code: MLSQEVLKKLEAIEQRFEELTALLSDPSVASNGDRFRKVSKERASLEPTVEALRAYRKLVTDIGDNEALLEEKDPDLREMAKEELAQLRPQVDPAEEQLKLYLVPKDPADEKDVILEIRAGAGGDEAGLFAAELLRMYLRYAERRGWRTEVADTSAGNLGGVKDVTVNIAGDSVYSWLKFESGVHRVQRVPATEAQGRIHTSTVTVAVMPEAEDIDIQVSPADIEMDVFRSTGSGGQSVNTTDSAVRLTHKPTGIIVKCQQEKSQLKNRNMAMRMLRAKLYEIELERQRSARDAARKSQVGTGDRSEKIRTYNFPQDRLTDHRINYTRHNLPAVMDGDVQDVIDACRTFYAAQALREASRGNAADGAAERRA.

Gln-237 is modified (N5-methylglutamine).

Belongs to the prokaryotic/mitochondrial release factor family. In terms of processing, methylated by PrmC. Methylation increases the termination efficiency of RF1.

The protein localises to the cytoplasm. In terms of biological role, peptide chain release factor 1 directs the termination of translation in response to the peptide chain termination codons UAG and UAA. This is Peptide chain release factor 1 from Anaeromyxobacter sp. (strain Fw109-5).